The primary structure comprises 350 residues: Methylthioribose-1-phosphate isomerase (350 aa).

Asp-241 serves as the catalytic Proton donor.

Belongs to the eIF-2B alpha/beta/delta subunits family. MtnA subfamily.

It localises to the cytoplasm. The protein localises to the nucleus. The catalysed reaction is 5-(methylsulfanyl)-alpha-D-ribose 1-phosphate = 5-(methylsulfanyl)-D-ribulose 1-phosphate. It participates in amino-acid biosynthesis; L-methionine biosynthesis via salvage pathway; L-methionine from S-methyl-5-thio-alpha-D-ribose 1-phosphate: step 1/6. In terms of biological role, catalyzes the interconversion of methylthioribose-1-phosphate (MTR-1-P) into methylthioribulose-1-phosphate (MTRu-1-P). This is Methylthioribose-1-phosphate isomerase from Nematostella vectensis (Starlet sea anemone).